The chain runs to 372 residues: 3-dehydroquinate synthase (372 aa).

NAD(+)-binding positions include 113-117, 137-138, Lys150, Lys159, and 177-180; these read GVIGD, TS, and TLKT. The Zn(2+) site is built by Glu192, His257, and His274.

The protein belongs to the sugar phosphate cyclases superfamily. Dehydroquinate synthase family. Co(2+) is required as a cofactor. The cofactor is Zn(2+). It depends on NAD(+) as a cofactor.

Its subcellular location is the cytoplasm. It catalyses the reaction 7-phospho-2-dehydro-3-deoxy-D-arabino-heptonate = 3-dehydroquinate + phosphate. The protein operates within metabolic intermediate biosynthesis; chorismate biosynthesis; chorismate from D-erythrose 4-phosphate and phosphoenolpyruvate: step 2/7. In terms of biological role, catalyzes the conversion of 3-deoxy-D-arabino-heptulosonate 7-phosphate (DAHP) to dehydroquinate (DHQ). The polypeptide is 3-dehydroquinate synthase (Acaryochloris marina (strain MBIC 11017)).